The chain runs to 159 residues: MDFLTADLCDEFSDRLQILAPGYASFGGHARFAGRIATLKVFEDNSRVREMLSEPGEGRVLVVDGGGSRRCALVGDQLGALAVRNGWAGIVVYGCIRDSVALGLLPLGVRALATHPLKSVKNGVGERELAVTFDGATFRPGDWLYADEDGVITSPDPLL.

Substrate-binding positions include Gly-75 to Leu-78 and Arg-97. Asp-98 contributes to the a divalent metal cation binding site.

The protein belongs to the class II aldolase/RraA-like family. Homotrimer. Requires a divalent metal cation as cofactor.

It catalyses the reaction 4-hydroxy-4-methyl-2-oxoglutarate = 2 pyruvate. The enzyme catalyses oxaloacetate + H(+) = pyruvate + CO2. Its function is as follows. Catalyzes the aldol cleavage of 4-hydroxy-4-methyl-2-oxoglutarate (HMG) into 2 molecules of pyruvate. Also contains a secondary oxaloacetate (OAA) decarboxylase activity due to the common pyruvate enolate transition state formed following C-C bond cleavage in the retro-aldol and decarboxylation reactions. The protein is Putative 4-hydroxy-4-methyl-2-oxoglutarate aldolase of Laribacter hongkongensis (strain HLHK9).